Consider the following 623-residue polypeptide: Glutathione import ATP-binding protein GsiA (623 aa).

ABC transporter domains are found at residues 15–269 (VENL…RALL) and 314–564 (LRVR…RKLL). ATP is bound by residues 49–56 (GESGSGKS) and 357–364 (GESGSGKS).

The protein belongs to the ABC transporter superfamily. Glutathione importer (TC 3.A.1.5.11) family. In terms of assembly, the complex is composed of two ATP-binding proteins (GsiA), two transmembrane proteins (GsiC and GsiD) and a solute-binding protein (GsiB).

Its subcellular location is the cell inner membrane. It carries out the reaction glutathione(out) + ATP + H2O = glutathione(in) + ADP + phosphate + H(+). Its function is as follows. Part of the ABC transporter complex GsiABCD involved in glutathione import. Responsible for energy coupling to the transport system. The polypeptide is Glutathione import ATP-binding protein GsiA (Shigella flexneri serotype 5b (strain 8401)).